Reading from the N-terminus, the 632-residue chain is Bestrophin homolog 24 (632 aa).

The next 4 helical transmembrane spans lie at 28–48 (IWKA…ILSV), 83–103 (GFFV…IGFI), 234–254 (IMYP…CLLA), and 271–291 (LYFP…MKVA). 2 disordered regions span residues 491–516 (LSNK…EHPF) and 562–632 (ETEV…TKFE). Positions 563-602 (TEVKRDEKKKKEEELREEGDNGKEEKDNKEDKKEEQDRPS) are enriched in basic and acidic residues. A compositionally biased stretch (basic residues) spans 623-632 (PHLRPPTKFE).

This sequence belongs to the anion channel-forming bestrophin (TC 1.A.46) family. Calcium-sensitive chloride channel subfamily. Forms oligomers.

The protein localises to the cell membrane. Functionally, forms chloride channels. The chain is Bestrophin homolog 24 (best-24) from Caenorhabditis elegans.